The sequence spans 579 residues: Proline--tRNA ligase (579 aa).

It belongs to the class-II aminoacyl-tRNA synthetase family. ProS type 1 subfamily. In terms of assembly, homodimer.

The protein localises to the cytoplasm. It carries out the reaction tRNA(Pro) + L-proline + ATP = L-prolyl-tRNA(Pro) + AMP + diphosphate. Catalyzes the attachment of proline to tRNA(Pro) in a two-step reaction: proline is first activated by ATP to form Pro-AMP and then transferred to the acceptor end of tRNA(Pro). As ProRS can inadvertently accommodate and process non-cognate amino acids such as alanine and cysteine, to avoid such errors it has two additional distinct editing activities against alanine. One activity is designated as 'pretransfer' editing and involves the tRNA(Pro)-independent hydrolysis of activated Ala-AMP. The other activity is designated 'posttransfer' editing and involves deacylation of mischarged Ala-tRNA(Pro). The misacylated Cys-tRNA(Pro) is not edited by ProRS. The sequence is that of Proline--tRNA ligase from Hamiltonella defensa subsp. Acyrthosiphon pisum (strain 5AT).